The primary structure comprises 62 residues: Large ribosomal subunit protein bL32 (62 aa).

This sequence belongs to the bacterial ribosomal protein bL32 family.

The polypeptide is Large ribosomal subunit protein bL32 (Levilactobacillus brevis (strain ATCC 367 / BCRC 12310 / CIP 105137 / JCM 1170 / LMG 11437 / NCIMB 947 / NCTC 947) (Lactobacillus brevis)).